We begin with the raw amino-acid sequence, 588 residues long: Adenine deaminase (588 aa).

The protein belongs to the metallo-dependent hydrolases superfamily. Adenine deaminase family. Homodimer. The cofactor is Mn(2+).

It catalyses the reaction adenine + H2O + H(+) = hypoxanthine + NH4(+). This Escherichia coli (strain K12 / DH10B) protein is Adenine deaminase.